Consider the following 388-residue polypeptide: MAYSARLRKAVGAVRATLSAVELCDVQAPEFAQHGDHAVAADAPLVLVACSGGRDSMALAAVSHIVCTSMGVRCGAVIVDHGLQAGSERVASEAADRCRALGLGPVIMRNATVQARGEGLEAAARQARYDELCAAAHESGAIAVLLAHTMDDQAETVLIGLLRSRGVDALAGMPQVFTRSGATFARPLLTLTRAETTGICEDLGVEYWDDPTNGDAVDGELPNDYPLRSRVRHDLLPAIERFAGFNVTRHFAESARLARMDKEYLDQRSDEVMGEAVAAVDRPASSAAVSTDAPRACVAGDTNDSGHGIGLMIGVKRIAREPEAIRLRVIAHALSQAGVNASAAQIAAIDRLVVDWHGQGGVSLPRGYSANRKKHVIRVCQDGAHANR.

An ATP-binding site is contributed by 51–56; it reads SGGRDS.

Belongs to the tRNA(Ile)-lysidine synthase family.

It localises to the cytoplasm. It catalyses the reaction cytidine(34) in tRNA(Ile2) + L-lysine + ATP = lysidine(34) in tRNA(Ile2) + AMP + diphosphate + H(+). Functionally, ligates lysine onto the cytidine present at position 34 of the AUA codon-specific tRNA(Ile) that contains the anticodon CAU, in an ATP-dependent manner. Cytidine is converted to lysidine, thus changing the amino acid specificity of the tRNA from methionine to isoleucine. This chain is tRNA(Ile)-lysidine synthase, found in Bifidobacterium longum (strain NCC 2705).